Consider the following 81-residue polypeptide: Cytotoxin 4 (81 aa).

A signal peptide spans 1 to 21; the sequence is MKTLLLTLVVVTIVCLDLGYT. Cystine bridges form between cysteine 24–cysteine 42, cysteine 35–cysteine 59, cysteine 63–cysteine 74, and cysteine 75–cysteine 80.

This sequence belongs to the three-finger toxin family. Short-chain subfamily. Type IA cytotoxin sub-subfamily. Monomer in solution; Homodimer and oligomer in the presence of negatively charged lipids forming a pore with a size ranging between 20 and 30 Angstroms. As to expression, expressed by the venom gland.

The protein resides in the secreted. The protein localises to the target cell membrane. In terms of biological role, basic protein that bind to cell membrane and depolarizes cardiomyocytes. This cytotoxin also shows lytic activities, but 2-fold more important than that of CTX-A2. It binds to the integrin alpha-V/beta-3 with a moderate affinity. Inhibits protein kinase C. It may interact with sulfatides in the cell membrane, which induces pore formation and cell internalization and is responsible for cytotoxicity in cardiomyocytes. It may also target the mitochondrial membrane and induces mitochondrial swelling and fragmentation. This chain is Cytotoxin 4, found in Naja atra (Chinese cobra).